The sequence spans 294 residues: Transcription termination/antitermination protein NusG (294 aa).

The segment at 1–91 (MSDPNLNDAV…EEAEPAAPVD (91 aa)) is disordered. The segment covering 25 to 39 (DIVEAADSVDPDQAE) has biased composition (acidic residues). The segment covering 40 to 53 (AADLAAGEPAERAA) has biased composition (low complexity). Over residues 59–85 (DDSDEDDAAAEEAVEADDESADEEEAE) the composition is skewed to acidic residues.

Belongs to the NusG family.

Functionally, participates in transcription elongation, termination and antitermination. In Streptomyces griseus, this protein is Transcription termination/antitermination protein NusG.